The following is a 219-amino-acid chain: 2-hydroxy-3-keto-5-methylthiopentenyl-1-phosphate phosphatase (219 aa).

The protein belongs to the HAD-like hydrolase superfamily. MtnX family.

The enzyme catalyses 2-hydroxy-5-methylsulfanyl-3-oxopent-1-enyl phosphate + H2O = 1,2-dihydroxy-5-(methylsulfanyl)pent-1-en-3-one + phosphate. The protein operates within amino-acid biosynthesis; L-methionine biosynthesis via salvage pathway; L-methionine from S-methyl-5-thio-alpha-D-ribose 1-phosphate: step 4/6. Its function is as follows. Dephosphorylates 2-hydroxy-3-keto-5-methylthiopentenyl-1-phosphate (HK-MTPenyl-1-P) yielding 1,2-dihydroxy-3-keto-5-methylthiopentene (DHK-MTPene). The chain is 2-hydroxy-3-keto-5-methylthiopentenyl-1-phosphate phosphatase from Bacillus cereus (strain ZK / E33L).